Here is a 391-residue protein sequence, read N- to C-terminus: Inositol-tetrakisphosphate 1-kinase 2 (391 aa).

The 1D-myo-inositol 1,3,4-trisphosphate site is built by Lys90 and Lys132. The ATP site is built by Arg167 and Lys217. Residues 178-384 form the ATP-grasp domain; that stretch reads KLSDCSGSLF…FFQNLAQVKY (207 aa). 1D-myo-inositol 1,3,4-trisphosphate-binding residues include His228 and Lys260. ATP-binding positions include 249 to 260 and Ser275; that span reads QEFVNHGGVMFK. Residues Asp340, Asp355, and Asn357 each coordinate Mg(2+). Residue Asn357 participates in 1D-myo-inositol 1,3,4-trisphosphate binding.

This sequence belongs to the ITPK1 family. Monomer. Mg(2+) is required as a cofactor. In terms of tissue distribution, expressed in seedling roots, cotyledons, rosette leaves, cauline leaves, stems, flowers, siliques and seeds.

It carries out the reaction 1D-myo-inositol 3,4,5,6-tetrakisphosphate + ATP = 1D-myo-inositol 1,3,4,5,6-pentakisphosphate + ADP + H(+). The enzyme catalyses 1D-myo-inositol 1,3,4-trisphosphate + ATP = 1D-myo-inositol 1,3,4,5-tetrakisphosphate + ADP + H(+). It catalyses the reaction 1D-myo-inositol 1,3,4-trisphosphate + ATP = 1D-myo-inositol 1,3,4,6-tetrakisphosphate + ADP + H(+). Kinase that can phosphorylate various inositol polyphosphate such as Ins(3,4,5,6)P4 or Ins(1,3,4)P3. Phosphorylates Ins(3,4,5,6)P4 to form InsP5. This reaction is thought to have regulatory importance, since Ins(3,4,5,6)P4 is an inhibitor of plasma membrane Ca(2+)-activated Cl(-) channels, while Ins(1,3,4,5,6)P5 is not. Also phosphorylates Ins(1,3,4)P3 or a racemic mixture of Ins(1,4,6)P3 and Ins(3,4,6)P3 to form InsP4. Ins(1,3,4,6)P4 is an essential molecule in the hexakisphosphate (InsP6) pathway. Plays a role in seed coat development and lipid polyester barrier formation. This Arabidopsis thaliana (Mouse-ear cress) protein is Inositol-tetrakisphosphate 1-kinase 2 (ITPK2).